The following is a 192-amino-acid chain: ATP synthase subunit b 2 (192 aa).

Residues 39–59 (SGFLAQLIWLALAFGLLYYLM) traverse the membrane as a helical segment.

It belongs to the ATPase B chain family. In terms of assembly, F-type ATPases have 2 components, F(1) - the catalytic core - and F(0) - the membrane proton channel. F(1) has five subunits: alpha(3), beta(3), gamma(1), delta(1), epsilon(1). F(0) has three main subunits: a(1), b(2) and c(10-14). The alpha and beta chains form an alternating ring which encloses part of the gamma chain. F(1) is attached to F(0) by a central stalk formed by the gamma and epsilon chains, while a peripheral stalk is formed by the delta and b chains.

The protein localises to the cell inner membrane. Its function is as follows. F(1)F(0) ATP synthase produces ATP from ADP in the presence of a proton or sodium gradient. F-type ATPases consist of two structural domains, F(1) containing the extramembraneous catalytic core and F(0) containing the membrane proton channel, linked together by a central stalk and a peripheral stalk. During catalysis, ATP synthesis in the catalytic domain of F(1) is coupled via a rotary mechanism of the central stalk subunits to proton translocation. Component of the F(0) channel, it forms part of the peripheral stalk, linking F(1) to F(0). The b'-subunit is a diverged and duplicated form of b found in plants and photosynthetic bacteria. The protein is ATP synthase subunit b 2 (atpF2) of Methylobacterium radiotolerans (strain ATCC 27329 / DSM 1819 / JCM 2831 / NBRC 15690 / NCIMB 10815 / 0-1).